The sequence spans 112 residues: Nucleoid-associated protein RER_03900 (112 aa).

This sequence belongs to the YbaB/EbfC family. As to quaternary structure, homodimer.

It localises to the cytoplasm. The protein localises to the nucleoid. In terms of biological role, binds to DNA and alters its conformation. May be involved in regulation of gene expression, nucleoid organization and DNA protection. This is Nucleoid-associated protein RER_03900 from Rhodococcus erythropolis (strain PR4 / NBRC 100887).